Reading from the N-terminus, the 130-residue chain is Small ribosomal subunit protein uS9 (130 aa).

It belongs to the universal ribosomal protein uS9 family.

The protein is Small ribosomal subunit protein uS9 of Clostridium beijerinckii (strain ATCC 51743 / NCIMB 8052) (Clostridium acetobutylicum).